The sequence spans 382 residues: Porin-like protein BU359 (382 aa).

Positions 1–23 (MTNRKSLAMVIPMLLAASNGVNA) are cleaved as a signal peptide.

This sequence belongs to the Gram-negative porin family. As to quaternary structure, homotrimer.

The protein resides in the cell outer membrane. In terms of biological role, forms pores that allow passive diffusion of small molecules across the membrane. The polypeptide is Porin-like protein BU359 (Buchnera aphidicola subsp. Acyrthosiphon pisum (strain APS) (Acyrthosiphon pisum symbiotic bacterium)).